Consider the following 878-residue polypeptide: Alanine--tRNA ligase (878 aa).

Zn(2+) contacts are provided by His-566, His-570, Cys-668, and His-672.

The protein belongs to the class-II aminoacyl-tRNA synthetase family. Zn(2+) is required as a cofactor.

The protein localises to the cytoplasm. The enzyme catalyses tRNA(Ala) + L-alanine + ATP = L-alanyl-tRNA(Ala) + AMP + diphosphate. Its function is as follows. Catalyzes the attachment of alanine to tRNA(Ala) in a two-step reaction: alanine is first activated by ATP to form Ala-AMP and then transferred to the acceptor end of tRNA(Ala). Also edits incorrectly charged Ser-tRNA(Ala) and Gly-tRNA(Ala) via its editing domain. This Geobacillus thermodenitrificans (strain NG80-2) protein is Alanine--tRNA ligase.